The following is a 223-amino-acid chain: Glutathione S-transferase A2 (223 aa).

Ala-2 carries the post-translational modification N-acetylalanine. A GST N-terminal domain is found at 3-83; that stretch reads GKPKLHYFNG…YIATKYNLYG (81 aa). The residue at position 4 (Lys-4) is an N6-succinyllysine. Glutathione is bound by residues Tyr-9, Arg-45, 54–55, and 67–68; these read QV and QT. The GST C-terminal domain maps to 85-208; sequence DMKERALIDM…QPGSQRKPPM (124 aa).

The protein belongs to the GST superfamily. Alpha family. As to quaternary structure, homodimer. In terms of tissue distribution, expressed in corpus luteum, adrenal gland, testis, liver, lung, thyroid and kidney.

The protein resides in the cytoplasm. The catalysed reaction is RX + glutathione = an S-substituted glutathione + a halide anion + H(+). Its function is as follows. Conjugation of reduced glutathione to a wide number of exogenous and endogenous hydrophobic electrophiles. This Bos taurus (Bovine) protein is Glutathione S-transferase A2 (GSTA2).